The primary structure comprises 136 residues: Large ribosomal subunit protein uL16 (136 aa).

It belongs to the universal ribosomal protein uL16 family. Part of the 50S ribosomal subunit.

Functionally, binds 23S rRNA and is also seen to make contacts with the A and possibly P site tRNAs. The chain is Large ribosomal subunit protein uL16 from Ehrlichia canis (strain Jake).